Here is a 392-residue protein sequence, read N- to C-terminus: uncharacterized protein (392 aa).

Positions 1–19 (MRRIVCPPVLFLSASLLTG) are cleaved as a signal peptide. A lipid anchor (N-palmitoyl cysteine) is attached at cysteine 20. Cysteine 20 carries the S-diacylglycerol cysteine lipid modification. The disordered stretch occupies residues 148–173 (SSGSSGGGGGGSGSSSDGGIKNGSDE). Positions 151 to 160 (SSGGGGGGSG) are enriched in gly residues.

It belongs to the TP013X lipoprotein family.

The protein resides in the cell membrane. This is an uncharacterized protein from Treponema pallidum (strain Nichols).